Consider the following 650-residue polypeptide: MAPGEKIKAKIKKNLPVRGPQAPTIKDLMHWYCMNTNTHGCRRIVVSRGRLRRLLWIAFTLTAVALIIWQCALLVFSFYTVSVSIKVHFQKLDFPAVTICNINPYKYSAVSDLLTDLDSETKQALLSLYGVKESRKRREAGSMPSTLEGTPPRFFKLIPLLVFNENEKGKARDFFTGRKRKISGKIIHKASNVMHVHESKKLVGFQLCSNDTSDCATYTFSSGINAIQEWYKLHYMNIMAQVPLEKKINMSYSAEELLVTCFFDGMSCDARNFTLFHHPMYGNCYTFNNKENATILSTSMGGSEYGLQVILYINEDEYNPFLVSSTGAKVLIHQQNEYPFIEDVGMEIETAMSTSIGMHLTESFKLSEPYSQCTEDGSDVPVTNIYNAAYSLQICLYSCFQTKMVEKCGCAQYSQPLPPAANYCNYQQHPNWMYCYYQLYQAFVREELGCQSVCKQSCSFKEWTLTTSLAQWPSEASEKWLLNVLTWDQSQQINKKLNKTDLAKLLIFYKDLNQRSIMESPANSIEMLLSNFGGQLGLWMSCSVVCVIEIIEVFFIDFFSIIARRQWHKAKDWWARRQTPPSTETPSSRQGQDNPALDTDDDLPTFTSAMRLPPAPGSTVPGTPPPRYNTLRLDRAFSSQLTDTQLTNEL.

Over 1-55 (MAPGEKIKAKIKKNLPVRGPQAPTIKDLMHWYCMNTNTHGCRRIVVSRGRLRRLL) the chain is Cytoplasmic. The chain crosses the membrane as a helical span at residues 56–76 (WIAFTLTAVALIIWQCALLVF). At 77-542 (SFYTVSVSIK…GGQLGLWMSC (466 aa)) the chain is on the extracellular side. Intrachain disulfides connect cysteine 100-cysteine 284, cysteine 208-cysteine 215, cysteine 261-cysteine 268, cysteine 373-cysteine 458, cysteine 395-cysteine 454, cysteine 399-cysteine 450, cysteine 408-cysteine 435, and cysteine 410-cysteine 424. Residues 135–222 (RKRREAGSMP…SDCATYTFSS (88 aa)) form a gating release of inhibition by proteolysis (GRIP); protease-sensitive region that is responsible for the proteolytic activation of the channel region. A glycan (N-linked (GlcNAc...) asparagine) is linked at asparagine 210. The N-linked (GlcNAc...) asparagine glycan is linked to asparagine 272. Residue asparagine 498 is glycosylated (N-linked (GlcNAc...) asparagine). Residues 543-563 (SVVCVIEIIEVFFIDFFSIIA) form a helical membrane-spanning segment. The Cytoplasmic portion of the chain corresponds to 564 to 650 (RRQWHKAKDW…LTDTQLTNEL (87 aa)). The interval 577–628 (RQTPPSTETPSSRQGQDNPALDTDDDLPTFTSAMRLPPAPGSTVPGTPPPRY) is disordered. Residues 579–593 (TPPSTETPSSRQGQD) are compositionally biased toward polar residues. Positions 624 to 628 (PPPRY) match the PY motif; mediates interaction, ubiquitination and inhibition by NEDD4 and NEDD4L motif. Residues 624-628 (PPPRY) carry the PY motif; recruits WW domain-containing proteins and is thereby required for ubiquitination and inhibition of the channel by NEDD4 and NEDD4L motif.

This sequence belongs to the amiloride-sensitive sodium channel (TC 1.A.6) family. SCNN1G subfamily. Component of the heterotrimeric epithelial sodium channel (ENaC) composed of an alpha/SCNN1A, a beta/SCNN1B and a gamma/SCNN1G subunit. Interacts with WWP1 (via WW domains). Interacts with WWP2 (via WW domains); inhibits the channel. Interacts with the full-length immature form of PCSK9 (pro-PCSK9); inhibits ENaC by promoting its proteasomal degradation. Interacts with BPIFA1; the interaction is indirect via SCNN1B and inhibits the proteolytic maturation of SCNN1A and SCNN1G and the activation of ENaC. Phosphorylated on serine and threonine residues. Aldosterone and insulin increase the basal level of phosphorylation. Post-translationally, ubiquitinated. Can be ubiquitinated at multiple sites and undergo monoubiquitination and polyubiquitination. Ubiquitination by NEDD4 or NEDD4L inhibits the ENaC channel through endocytosis, intracellular retention and degradation of its individual subunits. In terms of processing, ENaC is activated through the proteolytic maturation of its subunits. Furin cleaves the SCNN1G subunit first, followed by cleavage by prostasin (PRSS8), which results in a stepwise increase in the open probability of the channel due to the release of an inhibitory tract. BPIFA1, which is recruited by the SCNN1B subunit, prevents the proteolytic activation of ENaC. N-glycosylated. N-linked glycans are processed to complex type during ENaC complex assembly and transport to the plasma membrane.

It is found in the apical cell membrane. It catalyses the reaction Na(+)(in) = Na(+)(out). Its activity is regulated as follows. Originally identified and characterized by its inhibition by the diuretic drug amiloride. In terms of biological role, this is one of the three pore-forming subunits of the heterotrimeric epithelial sodium channel (ENaC), a critical regulator of sodium balance and fluid homeostasis. ENaC operates in epithelial tissues, where it mediates the electrodiffusion of sodium ions from extracellular fluid through the apical membrane of cells, with water following osmotically. It plays a key role in maintaining sodium homeostasis through electrogenic sodium reabsorption in the kidneys. Additionally, ENaC is essential for airway surface liquid homeostasis, which is crucial for proper mucus clearance. This chain is Epithelial sodium channel subunit gamma, found in Rattus norvegicus (Rat).